The primary structure comprises 209 residues: Large ribosomal subunit protein uL3 (209 aa).

Q150 is modified (N5-methylglutamine).

This sequence belongs to the universal ribosomal protein uL3 family. Part of the 50S ribosomal subunit. Forms a cluster with proteins L14 and L19. Methylated by PrmB.

Its function is as follows. One of the primary rRNA binding proteins, it binds directly near the 3'-end of the 23S rRNA, where it nucleates assembly of the 50S subunit. The chain is Large ribosomal subunit protein uL3 from Aliivibrio salmonicida (strain LFI1238) (Vibrio salmonicida (strain LFI1238)).